Here is a 628-residue protein sequence, read N- to C-terminus: MNAPDKLQDLLSLTREPFPASRKVYAEGSEGVRVPMREIALTNGERVTVYDTSGPYTDPLATIDAKLGLPSVRTGWIEARGDTETYAGRNRVALDDGGKHEETARIEALRAQAAALQRTPRRAKAGGNVTQMHYARRGIVTPEMEYVAIRENGKREWMREYLGDAEREARLAGNAKGARIPEIYTPEFVRDEVARGRAIIPANINHPEVEPMAIGRNFGVKINANIGNSAVTSSIEEEVEKLVWAIRWGADNVMDLSTGRNIHTTRDWIVRNSPVPIGTVPIYQALEKVGGIAEDLTWAIYRDTLIEQAEQGVDYFTIHAGVRLPFIHLTANRRTGIVSRGGSILAKWCITHHKENFLYTHFEEICEIMKAYDVSFSLGDGLRPGSASDANDAAQFAELKTLGELTQVAWKHDVQTMIEGPGHVPMHLIQANMDEQIKHCHEAPFYTLGPLTIDIAPGYDHIASAIGAAMIGWMGTAMLCYVTPKEHLGLPDRDDVKQGIIAYKIAAHAADIAKGHPGARARDDAMSKARFEFRWHDQFNLGLDPDTARDYHDETLPKDSSKEAHFCSMCGPKFCSMKITQDVRDYAAAKGLSEEQALADVEQGMAAKSAEFKAQGGELYIPITPVQA.

Residues Asn225, Met254, Tyr283, His319, 339-341, 380-383, and Glu419 each bind substrate; these read SRG and DGLR. His423 contributes to the Zn(2+) binding site. Residue Tyr446 coordinates substrate. Residue His487 coordinates Zn(2+). [4Fe-4S] cluster contacts are provided by Cys567, Cys570, and Cys575.

Belongs to the ThiC family. Homodimer. [4Fe-4S] cluster is required as a cofactor.

It catalyses the reaction 5-amino-1-(5-phospho-beta-D-ribosyl)imidazole + S-adenosyl-L-methionine = 4-amino-2-methyl-5-(phosphooxymethyl)pyrimidine + CO + 5'-deoxyadenosine + formate + L-methionine + 3 H(+). It participates in cofactor biosynthesis; thiamine diphosphate biosynthesis. Its function is as follows. Catalyzes the synthesis of the hydroxymethylpyrimidine phosphate (HMP-P) moiety of thiamine from aminoimidazole ribotide (AIR) in a radical S-adenosyl-L-methionine (SAM)-dependent reaction. The chain is Phosphomethylpyrimidine synthase from Leptothrix cholodnii (strain ATCC 51168 / LMG 8142 / SP-6) (Leptothrix discophora (strain SP-6)).